We begin with the raw amino-acid sequence, 136 residues long: Ubiquinol-cytochrome c reductase complex assembly factor 2 (136 aa).

Residues 1-13 (MAALRYRRFLKLC) constitute a mitochondrion transit peptide.

Interacts with UQCC1. Forms a complex, named COMB/coordinator of mitochondrial CYTB biogenesis, composed of UQCC1, UQCC2, UQCC4, UQCC5 and UQCC6; stabilizes nascent cytochrome b/MT-CYB and promotes its membrane insertion. Forms a complex, named COMA, composed of UQCC1, UQCC2 and UQCC4; activates MT-CYB translation. Forms a complex, named COMC, composed of UQCC1, UQCC2; UQCC3 and UQCC4; mediates MT-CYB hemylation and association with the first nuclear-encoded CIII subunit UQCRQ. As to expression, widely expressed with highest levels in brain, liver, kidney, heart, skeletal muscle, thymus, testis and pancreas (at protein level).

It localises to the mitochondrion matrix. The protein resides in the mitochondrion nucleoid. It is found in the mitochondrion. Its subcellular location is the mitochondrion intermembrane space. The protein localises to the mitochondrion inner membrane. Its function is as follows. Required for the assembly of the ubiquinol-cytochrome c reductase complex (mitochondrial respiratory chain complex III or cytochrome b-c1 complex). Plays a role in the modulation of respiratory chain activities such as oxygen consumption and ATP production and via its modulation of the respiratory chain activity can regulate skeletal muscle differentiation and insulin secretion by pancreatic beta-cells. Involved in cytochrome b translation and/or stability. This Mus musculus (Mouse) protein is Ubiquinol-cytochrome c reductase complex assembly factor 2 (Uqcc2).